Here is a 320-residue protein sequence, read N- to C-terminus: Ribosomal RNA small subunit methyltransferase H (320 aa).

S-adenosyl-L-methionine-binding positions include 42 to 44 (GGH), aspartate 62, phenylalanine 86, aspartate 108, and glutamine 115.

The protein belongs to the methyltransferase superfamily. RsmH family.

It is found in the cytoplasm. The catalysed reaction is cytidine(1402) in 16S rRNA + S-adenosyl-L-methionine = N(4)-methylcytidine(1402) in 16S rRNA + S-adenosyl-L-homocysteine + H(+). In terms of biological role, specifically methylates the N4 position of cytidine in position 1402 (C1402) of 16S rRNA. This chain is Ribosomal RNA small subunit methyltransferase H, found in Yersinia pseudotuberculosis serotype O:1b (strain IP 31758).